Reading from the N-terminus, the 66-residue chain is Ocellatin-PT5 (66 aa).

The signal sequence occupies residues 1–22 (MAFLKKSLFLVLFLGLVSLSIC). The propeptide occupies 23 to 39 (DEEKRQDEDDDDDDDEE). At valine 66 the chain carries Valine amide.

In terms of tissue distribution, expressed by the skin glands.

It localises to the secreted. In terms of biological role, has antibacterial activity against Gram-negative bacterium E.coli ATCC 25922 (MIC=300 uM) but not against S.pneumoniae ATCC 700603, S.choleraesuis ATCC 14028 or Gram-positive bacterium S.aureus ATCC 29313. Shows very little hemolytic activity and no cytotoxicity. This chain is Ocellatin-PT5, found in Leptodactylus pustulatus (Ceara white-lipped frog).